Consider the following 349-residue polypeptide: tRNA N6-adenosine threonylcarbamoyltransferase (349 aa).

2 residues coordinate Fe cation: H113 and H117. Substrate-binding positions include L135–G139, D169, G182, D186, and N281. D309 is a Fe cation binding site.

Belongs to the KAE1 / TsaD family. It depends on Fe(2+) as a cofactor.

The protein localises to the cytoplasm. It carries out the reaction L-threonylcarbamoyladenylate + adenosine(37) in tRNA = N(6)-L-threonylcarbamoyladenosine(37) in tRNA + AMP + H(+). Required for the formation of a threonylcarbamoyl group on adenosine at position 37 (t(6)A37) in tRNAs that read codons beginning with adenine. Is involved in the transfer of the threonylcarbamoyl moiety of threonylcarbamoyl-AMP (TC-AMP) to the N6 group of A37, together with TsaE and TsaB. TsaD likely plays a direct catalytic role in this reaction. The sequence is that of tRNA N6-adenosine threonylcarbamoyltransferase from Corynebacterium aurimucosum (strain ATCC 700975 / DSM 44827 / CIP 107346 / CN-1) (Corynebacterium nigricans).